Here is a 164-residue protein sequence, read N- to C-terminus: CASP-like protein 1C2 (164 aa).

Residues Met-1 to Leu-8 are Cytoplasmic-facing. The chain crosses the membrane as a helical span at residues Gly-9–Ile-29. The Extracellular segment spans residues Thr-30–Ala-51. A helical transmembrane segment spans residues Phe-52–Leu-72. Residues Pro-73 to Lys-80 are Cytoplasmic-facing. A helical transmembrane segment spans residues Phe-81 to Val-101. Residues Ala-102–Gln-129 lie on the Extracellular side of the membrane. A helical transmembrane segment spans residues Ile-130–Phe-150. Over Ser-151 to Ser-164 the chain is Cytoplasmic.

This sequence belongs to the Casparian strip membrane proteins (CASP) family. As to quaternary structure, homodimer and heterodimers.

Its subcellular location is the cell membrane. This is CASP-like protein 1C2 from Arabidopsis thaliana (Mouse-ear cress).